Here is a 354-residue protein sequence, read N- to C-terminus: Probable L-ascorbate-6-phosphate lactonase UlaG (354 aa).

It belongs to the UlaG family. The cofactor is a divalent metal cation.

It is found in the cytoplasm. The enzyme catalyses L-ascorbate 6-phosphate + H2O = 3-dehydro-L-gulonate 6-phosphate. The protein operates within cofactor degradation; L-ascorbate degradation; D-xylulose 5-phosphate from L-ascorbate: step 1/4. Functionally, probably catalyzes the hydrolysis of L-ascorbate-6-P into 3-keto-L-gulonate-6-P. Is essential for L-ascorbate utilization under anaerobic conditions. This Escherichia fergusonii (strain ATCC 35469 / DSM 13698 / CCUG 18766 / IAM 14443 / JCM 21226 / LMG 7866 / NBRC 102419 / NCTC 12128 / CDC 0568-73) protein is Probable L-ascorbate-6-phosphate lactonase UlaG.